We begin with the raw amino-acid sequence, 131 residues long: Large ribosomal subunit protein bL12 (131 aa).

The protein belongs to the bacterial ribosomal protein bL12 family. As to quaternary structure, homodimer. Part of the ribosomal stalk of the 50S ribosomal subunit. Forms a multimeric L10(L12)X complex, where L10 forms an elongated spine to which 2 to 4 L12 dimers bind in a sequential fashion. Binds GTP-bound translation factors.

In terms of biological role, forms part of the ribosomal stalk which helps the ribosome interact with GTP-bound translation factors. Is thus essential for accurate translation. This is Large ribosomal subunit protein bL12 from Prochlorococcus marinus (strain MIT 9301).